The sequence spans 378 residues: Putative dioxygenase VC_1345 (378 aa).

Fe cation contacts are provided by histidine 288, aspartate 294, and histidine 324.

This sequence belongs to the homogentisate dioxygenase family. Fe cation serves as cofactor.

The protein is Putative dioxygenase VC_1345 of Vibrio cholerae serotype O1 (strain ATCC 39315 / El Tor Inaba N16961).